The sequence spans 168 residues: DAZ-associated protein 2 (168 aa).

The segment covering 1-13 (MNSKGQYPTQPTY) has biased composition (low complexity). Residues 1–25 (MNSKGQYPTQPTYPVQPPGNPVYPQ) form a disordered region. The PPAY signature appears at 39 to 42 (PPAY). Position 77 is a phosphoserine (Ser77).

As to quaternary structure, interacts with SOX6. Interacts with DAZ1 and DAZL. Interacts with IL17RB. May interact with FAM168B. Interacts with INCA1. Interacts with EIF4G1 and EIF4G2. Interacts (via PPAY motif) with NEDD4 (via WW domains). Interacts with transcription factor TCF4; the interaction results in localization of DAZAP2 to the nucleus. Interacts with transcription factors TCF7 and TCF7L1. Interacts with transcription factor LEF1. Interacts with serine/threonine-protein kinase HIPK2; the interaction results in phosphorylation of DAZAP2 which causes localization of DAZAP2 to the nucleus, reduces interaction of DAZAP2 with HIPK2 and prevents DAZAP2-dependent degradation of HIPK2. Interacts with ubiquitin ligase SIAH1; the interaction is decreased following phosphorylation of DAZAP2 by HIPK2. Interacts with TP53; the interaction is triggered by DNA damage. In terms of processing, ubiquitinated by SMURF2, leading to proteasomal degradation. Ubiquitinated by NEDD4, leading to proteasomal degradation. Following DNA damage, phosphorylated by HIPK2 which promotes DAZAP2 localization to the nucleus, reduces interaction of DAZAP2 with HIPK2 and SIAH1, and prevents DAZAP2-dependent ubiquitination of HIPK2 by E3 ubiquitin-protein ligase SIAH1 and subsequent HIPK2 proteasomal degradation.

The protein localises to the cytoplasm. Its subcellular location is the nucleus. The protein resides in the nucleus speckle. It is found in the nuclear body. It localises to the stress granule. In terms of biological role, in unstressed cells, promotes SIAH1-mediated polyubiquitination and degradation of the serine/threonine-protein kinase HIPK2, probably by acting as a loading factor that potentiates complex formation between HIPK2 and ubiquitin ligase SIAH1. In response to DNA damage, localizes to the nucleus following phosphorylation by HIPK2 and modulates the expression of a subset of TP53/p53 target genes by binding to TP53 at target gene promoters. This limits the expression of a number of cell death-mediating TP53 target genes, reducing DNA damage-induced cell death. Enhances the binding of transcription factor TCF7L2/TCF4, a Wnt signaling pathway effector, to the promoters of target genes. Plays a role in stress granule formation. This Macaca fascicularis (Crab-eating macaque) protein is DAZ-associated protein 2.